A 158-amino-acid polypeptide reads, in one-letter code: Transcriptional repressor NrdR (158 aa).

Residues 1 to 20 (MRCPYCQSEDTQVKDSRPAE) form a disordered region. Residues 3–34 (CPYCQSEDTQVKDSRPAEDGAVIRRRRVCSVC) fold into a zinc finger. A compositionally biased stretch (basic and acidic residues) spans 11–20 (TQVKDSRPAE). In terms of domain architecture, ATP-cone spans 49–139 (LMVVKKSGRR…VYRNFSKAVD (91 aa)).

It belongs to the NrdR family. Zn(2+) is required as a cofactor.

In terms of biological role, negatively regulates transcription of bacterial ribonucleotide reductase nrd genes and operons by binding to NrdR-boxes. The chain is Transcriptional repressor NrdR from Brucella anthropi (strain ATCC 49188 / DSM 6882 / CCUG 24695 / JCM 21032 / LMG 3331 / NBRC 15819 / NCTC 12168 / Alc 37) (Ochrobactrum anthropi).